Reading from the N-terminus, the 197-residue chain is ATP-dependent Clp protease proteolytic subunit (197 aa).

The active-site Nucleophile is the Ser-98. His-123 is a catalytic residue.

The protein belongs to the peptidase S14 family. As to quaternary structure, fourteen ClpP subunits assemble into 2 heptameric rings which stack back to back to give a disk-like structure with a central cavity, resembling the structure of eukaryotic proteasomes.

It localises to the cytoplasm. The enzyme catalyses Hydrolysis of proteins to small peptides in the presence of ATP and magnesium. alpha-casein is the usual test substrate. In the absence of ATP, only oligopeptides shorter than five residues are hydrolyzed (such as succinyl-Leu-Tyr-|-NHMec, and Leu-Tyr-Leu-|-Tyr-Trp, in which cleavage of the -Tyr-|-Leu- and -Tyr-|-Trp bonds also occurs).. Cleaves peptides in various proteins in a process that requires ATP hydrolysis. Has a chymotrypsin-like activity. Plays a major role in the degradation of misfolded proteins. The sequence is that of ATP-dependent Clp protease proteolytic subunit from Anaplasma phagocytophilum (strain HZ).